We begin with the raw amino-acid sequence, 184 residues long: ATP synthase subunit b, chloroplastic (184 aa).

The chain crosses the membrane as a helical span at residues L27 to L49.

It belongs to the ATPase B chain family. As to quaternary structure, F-type ATPases have 2 components, F(1) - the catalytic core - and F(0) - the membrane proton channel. F(1) has five subunits: alpha(3), beta(3), gamma(1), delta(1), epsilon(1). F(0) has four main subunits: a(1), b(1), b'(1) and c(10-14). The alpha and beta chains form an alternating ring which encloses part of the gamma chain. F(1) is attached to F(0) by a central stalk formed by the gamma and epsilon chains, while a peripheral stalk is formed by the delta, b and b' chains.

It is found in the plastid. Its subcellular location is the chloroplast thylakoid membrane. F(1)F(0) ATP synthase produces ATP from ADP in the presence of a proton or sodium gradient. F-type ATPases consist of two structural domains, F(1) containing the extramembraneous catalytic core and F(0) containing the membrane proton channel, linked together by a central stalk and a peripheral stalk. During catalysis, ATP synthesis in the catalytic domain of F(1) is coupled via a rotary mechanism of the central stalk subunits to proton translocation. Functionally, component of the F(0) channel, it forms part of the peripheral stalk, linking F(1) to F(0). In Crucihimalaya wallichii (Rock-cress), this protein is ATP synthase subunit b, chloroplastic.